Reading from the N-terminus, the 359-residue chain is Protein disulfide-isomerase tigA (359 aa).

An N-terminal signal peptide occupies residues 1–19; it reads MVRLSNLVSCLGLASAVTA. 2 Thioredoxin domains span residues 20 to 129 and 131 to 250; these read AVVD…EKTG and KPRG…EKTG. Active-site nucleophile residues include C49, C52, C169, and C172. 2 disulfides stabilise this stretch: C49/C52 and C169/C172. Positions 356–359 match the Prevents secretion from ER motif; sequence KDEL.

This sequence belongs to the protein disulfide isomerase family.

Its subcellular location is the endoplasmic reticulum lumen. It carries out the reaction Catalyzes the rearrangement of -S-S- bonds in proteins.. The protein is Protein disulfide-isomerase tigA (tigA) of Aspergillus niger.